A 269-amino-acid polypeptide reads, in one-letter code: HTH-type transcriptional activator ArnR (269 aa).

Topologically, residues 1-218 (MTKSLFDVLK…LLRLTNSYTL (218 aa)) are cytoplasmic. A DNA-binding region (H-T-H motif) is located at residues 39-62 (TTEISQTINTSRKSIIDAIRKLVD). The chain crosses the membrane as a helical span at residues 219–239 (EMANVKVMGFILISLPLLMYF). Residues 240–242 (RDQ) lie on the Extracellular side of the membrane. A helical membrane pass occupies residues 243–263 (LGLIELPWLYAVIFLALLSVF). Residues 264 to 269 (AQILSR) are Cytoplasmic-facing.

Its subcellular location is the cell membrane. In terms of biological role, involved in regulation of archaellar gene expression. Activates flaB transcription upon nutrient starvation by acting on the flaB promoter. In Sulfolobus acidocaldarius (strain ATCC 33909 / DSM 639 / JCM 8929 / NBRC 15157 / NCIMB 11770), this protein is HTH-type transcriptional activator ArnR.